A 569-amino-acid chain; its full sequence is MFLELKAQATSILKEAIRKAGFEVEDSELQFETSPHADLASRAAFRLAGIHRQNPKDLASRIVSAVEIPEGSFIGKVSAAGPYINFFAGKHYLNGTVNAVLKEKEKFGCGAPKDRILLEHTSANPNGPLHVGHIRNSIIGDTLARILRRAGYDVEVQYYVNDMGRQIAVVSWACERFELDLSRKSDSAIADVYIKANVELDKNPGYIKEIDALMEKVEAGDVRTIEHFDKAVSLAVAGIKETLLRLNVAHDKFVSESTFLKSGAVHDIVERIKATGRTKTDKGALVVDLSDYGFEKTLVIQRSNGTSLYTTRDLAYHEWKAGQADRIIDVFGADHKLISGQLRATLNAIGVKEPEVVIFEFVSLPEGSMSTRRGQFISADDLFDRVTGAAFEQVETRRPETSYEFKKQVAEAVGLGAVRYDIVRVSPEKSTVFNWKEALDFEKQGAPYIQYSHARACSILEKAKEEAAWNPDKEIDPSLLVEDSEIDLIKKMAMFDSVIDLGARELKPHVLAIYARELADAFNQFYRFVPVIAAEDENVRAARLALVDCARVVLANSLDTLGIIAPESM.

Residues 123–133 (ANPNGPLHVGH) carry the 'HIGH' region motif.

Belongs to the class-I aminoacyl-tRNA synthetase family.

Its subcellular location is the cytoplasm. The catalysed reaction is tRNA(Arg) + L-arginine + ATP = L-arginyl-tRNA(Arg) + AMP + diphosphate. This chain is Arginine--tRNA ligase, found in Methanosarcina mazei (strain ATCC BAA-159 / DSM 3647 / Goe1 / Go1 / JCM 11833 / OCM 88) (Methanosarcina frisia).